Reading from the N-terminus, the 515-residue chain is Rop guanine nucleotide exchange factor 12 (515 aa).

A PRONE domain is found at 83–446 (QARERQLLAD…RAGNKRNTPL (364 aa)). Serine 510 carries the post-translational modification Phosphoserine.

Interacts (via C-terminus) with PRK2. Interacts with PRK6. Expressed in pollen grains.

The protein resides in the cytoplasm. It localises to the cell membrane. Its activity is regulated as follows. Phosphorylation at Ser-510 by PRK2 may release ROPGEF12 auto-inhibition, thereby activating ROPGEF12 and downstream Rop signaling. Functionally, guanine-nucleotide exchange factor (GEF) that acts as an activator of Rop (Rho of plants) GTPases by promoting the exchange of GDP for GTP. May be recruited by PRK2 at the plasma membrane to maintain polar Rop activity in the pollen tube and control polarized pollen tube growth. This Arabidopsis thaliana (Mouse-ear cress) protein is Rop guanine nucleotide exchange factor 12.